A 345-amino-acid chain; its full sequence is UDP-N-acetylenolpyruvoylglucosamine reductase (345 aa).

The 169-residue stretch at 25–193 (LPAHCTDFVS…VGVTFLLPKA (169 aa)) folds into the FAD-binding PCMH-type domain. Arg169 is an active-site residue. Ser237 acts as the Proton donor in catalysis. Residue Glu333 is part of the active site.

This sequence belongs to the MurB family. FAD is required as a cofactor.

It localises to the cytoplasm. The enzyme catalyses UDP-N-acetyl-alpha-D-muramate + NADP(+) = UDP-N-acetyl-3-O-(1-carboxyvinyl)-alpha-D-glucosamine + NADPH + H(+). Its pathway is cell wall biogenesis; peptidoglycan biosynthesis. Functionally, cell wall formation. This Pseudoalteromonas atlantica (strain T6c / ATCC BAA-1087) protein is UDP-N-acetylenolpyruvoylglucosamine reductase.